The chain runs to 159 residues: Aspartate carbamoyltransferase regulatory chain (159 aa).

Zn(2+) is bound by residues Cys111, Cys116, Cys141, and Cys144.

The protein belongs to the PyrI family. As to quaternary structure, contains catalytic and regulatory chains. The cofactor is Zn(2+).

Functionally, involved in allosteric regulation of aspartate carbamoyltransferase. The chain is Aspartate carbamoyltransferase regulatory chain from Aeropyrum pernix (strain ATCC 700893 / DSM 11879 / JCM 9820 / NBRC 100138 / K1).